Reading from the N-terminus, the 452-residue chain is tRNA modification GTPase MnmE (452 aa).

3 residues coordinate (6S)-5-formyl-5,6,7,8-tetrahydrofolate: arginine 21, glutamate 82, and arginine 121. A TrmE-type G domain is found at 217-373 (GINTTIIGKP…LENKIIEMFN (157 aa)). Asparagine 227 is a K(+) binding site. Residues 227–232 (NVGKSS), 246–252 (TDIPGTT), and 271–274 (DTAG) each bind GTP. Serine 231 provides a ligand contact to Mg(2+). 3 residues coordinate K(+): threonine 246, isoleucine 248, and threonine 251. Threonine 252 lines the Mg(2+) pocket. Lysine 452 is a binding site for (6S)-5-formyl-5,6,7,8-tetrahydrofolate.

Belongs to the TRAFAC class TrmE-Era-EngA-EngB-Septin-like GTPase superfamily. TrmE GTPase family. Homodimer. Heterotetramer of two MnmE and two MnmG subunits. It depends on K(+) as a cofactor.

The protein resides in the cytoplasm. Exhibits a very high intrinsic GTPase hydrolysis rate. Involved in the addition of a carboxymethylaminomethyl (cmnm) group at the wobble position (U34) of certain tRNAs, forming tRNA-cmnm(5)s(2)U34. The chain is tRNA modification GTPase MnmE from Finegoldia magna (strain ATCC 29328 / DSM 20472 / WAL 2508) (Peptostreptococcus magnus).